Here is a 258-residue protein sequence, read N- to C-terminus: Type III pantothenate kinase (258 aa).

7 to 14 (DVGNTRLK) is an ATP binding site. Residues tyrosine 96 and 103–106 (GADR) contribute to the substrate site. Aspartate 105 functions as the Proton acceptor in the catalytic mechanism. Threonine 133 serves as a coordination point for ATP. Threonine 183 contacts substrate.

It belongs to the type III pantothenate kinase family. Homodimer. NH4(+) is required as a cofactor. Requires K(+) as cofactor.

It is found in the cytoplasm. It catalyses the reaction (R)-pantothenate + ATP = (R)-4'-phosphopantothenate + ADP + H(+). Its pathway is cofactor biosynthesis; coenzyme A biosynthesis; CoA from (R)-pantothenate: step 1/5. Catalyzes the phosphorylation of pantothenate (Pan), the first step in CoA biosynthesis. The polypeptide is Type III pantothenate kinase (Acidovorax ebreus (strain TPSY) (Diaphorobacter sp. (strain TPSY))).